The primary structure comprises 100 residues: Acylphosphatase (100 aa).

The region spanning 3–92 is the Acylphosphatase-like domain; the sequence is RRSYSVIGRV…PLPDTFDIRF (90 aa). Residues Arg-18 and Asn-36 contribute to the active site. The disordered stretch occupies residues 76–100; the sequence is DDPAHEGPLPDTFDIRFRAPGSASE.

This sequence belongs to the acylphosphatase family.

It catalyses the reaction an acyl phosphate + H2O = a carboxylate + phosphate + H(+). The polypeptide is Acylphosphatase (acyP) (Nitratidesulfovibrio vulgaris (strain ATCC 29579 / DSM 644 / CCUG 34227 / NCIMB 8303 / VKM B-1760 / Hildenborough) (Desulfovibrio vulgaris)).